Reading from the N-terminus, the 131-residue chain is Small ribosomal subunit protein uS8 (131 aa).

It belongs to the universal ribosomal protein uS8 family. In terms of assembly, part of the 30S ribosomal subunit. Contacts proteins S5 and S12.

One of the primary rRNA binding proteins, it binds directly to 16S rRNA central domain where it helps coordinate assembly of the platform of the 30S subunit. This chain is Small ribosomal subunit protein uS8, found in Alkalilimnicola ehrlichii (strain ATCC BAA-1101 / DSM 17681 / MLHE-1).